The primary structure comprises 253 residues: Phosphate import ATP-binding protein PstB (253 aa).

Positions 7 to 248 (IEVEDLNVYF…PRDKRTEDYI (242 aa)) constitute an ABC transporter domain. Position 39-46 (39-46 (GPSGCGKS)) interacts with ATP.

Belongs to the ABC transporter superfamily. Phosphate importer (TC 3.A.1.7) family. As to quaternary structure, the complex is composed of two ATP-binding proteins (PstB), two transmembrane proteins (PstC and PstA) and a solute-binding protein (PstS).

It localises to the cell membrane. The enzyme catalyses phosphate(out) + ATP + H2O = ADP + 2 phosphate(in) + H(+). Its function is as follows. Part of the ABC transporter complex PstSACB involved in phosphate import. Responsible for energy coupling to the transport system. The chain is Phosphate import ATP-binding protein PstB from Methanothermobacter thermautotrophicus (strain ATCC 29096 / DSM 1053 / JCM 10044 / NBRC 100330 / Delta H) (Methanobacterium thermoautotrophicum).